The following is a 269-amino-acid chain: Thiazole synthase (269 aa).

Lys109 (schiff-base intermediate with DXP) is an active-site residue. Residues Gly170, 196 to 197 (AG), and 218 to 219 (NT) contribute to the 1-deoxy-D-xylulose 5-phosphate site.

It belongs to the ThiG family. As to quaternary structure, homotetramer. Forms heterodimers with either ThiH or ThiS.

The protein localises to the plastid. It localises to the chloroplast. It catalyses the reaction [ThiS sulfur-carrier protein]-C-terminal-Gly-aminoethanethioate + 2-iminoacetate + 1-deoxy-D-xylulose 5-phosphate = [ThiS sulfur-carrier protein]-C-terminal Gly-Gly + 2-[(2R,5Z)-2-carboxy-4-methylthiazol-5(2H)-ylidene]ethyl phosphate + 2 H2O + H(+). It participates in cofactor biosynthesis; thiamine diphosphate biosynthesis. Catalyzes the rearrangement of 1-deoxy-D-xylulose 5-phosphate (DXP) to produce the thiazole phosphate moiety of thiamine. Sulfur is provided by the thiocarboxylate moiety of the carrier protein ThiS. In vitro, sulfur can be provided by H(2)S. The sequence is that of Thiazole synthase from Thalassiosira pseudonana (Marine diatom).